A 342-amino-acid polypeptide reads, in one-letter code: N-acetyl-gamma-glutamyl-phosphate reductase (342 aa).

Cys149 is an active-site residue.

This sequence belongs to the NAGSA dehydrogenase family. Type 1 subfamily.

The protein resides in the cytoplasm. It carries out the reaction N-acetyl-L-glutamate 5-semialdehyde + phosphate + NADP(+) = N-acetyl-L-glutamyl 5-phosphate + NADPH + H(+). The protein operates within amino-acid biosynthesis; L-arginine biosynthesis; N(2)-acetyl-L-ornithine from L-glutamate: step 3/4. Functionally, catalyzes the NADPH-dependent reduction of N-acetyl-5-glutamyl phosphate to yield N-acetyl-L-glutamate 5-semialdehyde. The sequence is that of N-acetyl-gamma-glutamyl-phosphate reductase from Cereibacter sphaeroides (strain ATCC 17023 / DSM 158 / JCM 6121 / CCUG 31486 / LMG 2827 / NBRC 12203 / NCIMB 8253 / ATH 2.4.1.) (Rhodobacter sphaeroides).